Reading from the N-terminus, the 491-residue chain is Probable glycine dehydrogenase (decarboxylating) subunit 2 (491 aa).

Lysine 273 bears the N6-(pyridoxal phosphate)lysine mark.

This sequence belongs to the GcvP family. C-terminal subunit subfamily. The glycine cleavage system is composed of four proteins: P, T, L and H. In this organism, the P 'protein' is a heterodimer of two subunits. The cofactor is pyridoxal 5'-phosphate.

The enzyme catalyses N(6)-[(R)-lipoyl]-L-lysyl-[glycine-cleavage complex H protein] + glycine + H(+) = N(6)-[(R)-S(8)-aminomethyldihydrolipoyl]-L-lysyl-[glycine-cleavage complex H protein] + CO2. The glycine cleavage system catalyzes the degradation of glycine. The P protein binds the alpha-amino group of glycine through its pyridoxal phosphate cofactor; CO(2) is released and the remaining methylamine moiety is then transferred to the lipoamide cofactor of the H protein. This is Probable glycine dehydrogenase (decarboxylating) subunit 2 from Bacillus anthracis (strain A0248).